A 105-amino-acid polypeptide reads, in one-letter code: Integration host factor subunit beta (105 aa).

This sequence belongs to the bacterial histone-like protein family. In terms of assembly, heterodimer of an alpha and a beta chain.

Its function is as follows. This protein is one of the two subunits of integration host factor, a specific DNA-binding protein that functions in genetic recombination as well as in transcriptional and translational control. The sequence is that of Integration host factor subunit beta from Bradyrhizobium sp. (strain ORS 278).